The sequence spans 420 residues: MRLDEYMDIERDERAERRRLAEEKSYGILDHLETFQDRFEETVQGDSLYGGVSPSIFVGRSNYPNVSTGILSPVGHDEDAASFETSAAWYDEGVSIDDVFQRRTSLLNSNRGTKVTNVADSWDGFLGTQREVAIADRPVTVEIGLDGKPSLDLDASADDVATPVGPRARARSADLAENPHVPKLVKKTLEDDDWNAEGAMTYLYRRGFDVYDINTILSAGALGQTEQRRLVPTRWSITAVDDTLGQYLRGQVKHAESVDGVEIYRNEFIGNAFWVILAPGRWEFELIELKAPGSVWNPDPEAGMYLAADREGYEGRTGYVNETAGAYHASRLGVLEHLQERGRQAKALVIRHVSDDYWGPVGVWQIRESIRHAFEGEMADAETFGDAVRDVTEYLPVSLADLRRKSTMAAGLQTDIFDFA.

Residues 413 to 420 carry the PIP motif motif; it reads QTDIFDFA.

The protein belongs to the Nre family. In terms of assembly, interacts with the DNA polymerase sliding clamp (PCNA) via the PIP (PCNA-interacting peptide) motif.

Its function is as follows. Involved in DNA damage repair. Works together with the UvrABC proteins in repairing DNA damage resulting from exposure to the DNA damaging agent mitomycin C (MMC). The protein is DNA repair protein NreA of Haloferax volcanii (strain ATCC 29605 / DSM 3757 / JCM 8879 / NBRC 14742 / NCIMB 2012 / VKM B-1768 / DS2) (Halobacterium volcanii).